Reading from the N-terminus, the 264-residue chain is Acyl-[acyl-carrier-protein]--UDP-N-acetylglucosamine O-acyltransferase (264 aa).

The protein belongs to the transferase hexapeptide repeat family. LpxA subfamily. In terms of assembly, homotrimer.

The protein resides in the cytoplasm. The catalysed reaction is a (3R)-hydroxyacyl-[ACP] + UDP-N-acetyl-alpha-D-glucosamine = a UDP-3-O-[(3R)-3-hydroxyacyl]-N-acetyl-alpha-D-glucosamine + holo-[ACP]. The protein operates within glycolipid biosynthesis; lipid IV(A) biosynthesis; lipid IV(A) from (3R)-3-hydroxytetradecanoyl-[acyl-carrier-protein] and UDP-N-acetyl-alpha-D-glucosamine: step 1/6. Functionally, involved in the biosynthesis of lipid A, a phosphorylated glycolipid that anchors the lipopolysaccharide to the outer membrane of the cell. This chain is Acyl-[acyl-carrier-protein]--UDP-N-acetylglucosamine O-acyltransferase, found in Haemophilus ducreyi (strain 35000HP / ATCC 700724).